Reading from the N-terminus, the 157-residue chain is ATP synthase subunit b (157 aa).

A helical transmembrane segment spans residues 7–27; sequence LIAQLVVFFILAWFTMKFVWP.

The protein belongs to the ATPase B chain family. In terms of assembly, F-type ATPases have 2 components, F(1) - the catalytic core - and F(0) - the membrane proton channel. F(1) has five subunits: alpha(3), beta(3), gamma(1), delta(1), epsilon(1). F(0) has three main subunits: a(1), b(2) and c(10-14). The alpha and beta chains form an alternating ring which encloses part of the gamma chain. F(1) is attached to F(0) by a central stalk formed by the gamma and epsilon chains, while a peripheral stalk is formed by the delta and b chains.

It localises to the cell inner membrane. Its function is as follows. F(1)F(0) ATP synthase produces ATP from ADP in the presence of a proton or sodium gradient. F-type ATPases consist of two structural domains, F(1) containing the extramembraneous catalytic core and F(0) containing the membrane proton channel, linked together by a central stalk and a peripheral stalk. During catalysis, ATP synthesis in the catalytic domain of F(1) is coupled via a rotary mechanism of the central stalk subunits to proton translocation. Functionally, component of the F(0) channel, it forms part of the peripheral stalk, linking F(1) to F(0). This is ATP synthase subunit b from Azoarcus sp. (strain BH72).